Here is an 81-residue protein sequence, read N- to C-terminus: Photosystem I iron-sulfur center (81 aa).

4Fe-4S ferredoxin-type domains follow at residues 1-31 (MSHSVKIYDTCIGCTQCVRACPLDVLEMVPW) and 39-68 (IASSPRTEDCIGCKRCETACPTDFLSIRVY). [4Fe-4S] cluster-binding residues include C11, C14, C17, C21, C48, C51, C54, and C58.

As to quaternary structure, the cyanobacterial PSI reaction center is composed of one copy each of PsaA,B,C,D,E,F,I,J,K,L,M and X, and forms trimeric complexes. The cofactor is [4Fe-4S] cluster.

It is found in the cellular thylakoid membrane. The catalysed reaction is reduced [plastocyanin] + hnu + oxidized [2Fe-2S]-[ferredoxin] = oxidized [plastocyanin] + reduced [2Fe-2S]-[ferredoxin]. In terms of biological role, apoprotein for the two 4Fe-4S centers FA and FB of photosystem I (PSI); essential for photochemical activity. FB is the terminal electron acceptor of PSI, donating electrons to ferredoxin. The C-terminus interacts with PsaA/B/D and helps assemble the protein into the PSI complex. Required for binding of PsaD and PsaE to PSI. PSI is a plastocyanin/cytochrome c6-ferredoxin oxidoreductase, converting photonic excitation into a charge separation, which transfers an electron from the donor P700 chlorophyll pair to the spectroscopically characterized acceptors A0, A1, FX, FA and FB in turn. The chain is Photosystem I iron-sulfur center from Microcystis aeruginosa (strain NIES-843 / IAM M-2473).